Reading from the N-terminus, the 273-residue chain is MGQKLSGSLKSVEVREPALRPAKRELRGAEPGRPARLDQLLDMPAAGLAVQLRHAWNPEDRSLNVFVKDDDRLTFHRHPVAQSTDGIRGKVGHARGLHAWQINWPARQRGTHAVVGVATARAPLHSVGYTALVGSDAESWGWDLGRSRLYHDGKNQPGVAYPAFLGPDEAFALPDSLLVVLDMDEGTLSFIVDGQYLGVAFRGLKGKKLYPVVSAVWGHCEVTMRYINGLDPEPLPLMDLCRRSIRSALGRQRLQDISSLPLPQSLKNYLQYQ.

The segment at 1–34 (MGQKLSGSLKSVEVREPALRPAKRELRGAEPGRP) is disordered. The segment covering 12–34 (VEVREPALRPAKRELRGAEPGRP) has biased composition (basic and acidic residues). The B30.2/SPRY domain occupies 34–233 (PARLDQLLDM…MRYINGLDPE (200 aa)). In terms of domain architecture, SOCS box spans 234 to 273 (PLPLMDLCRRSIRSALGRQRLQDISSLPLPQSLKNYLQYQ).

This sequence belongs to the SPSB family. As to quaternary structure, component of the probable ECS(SPSB4) E3 ubiquitin-protein ligase complex which contains CUL5, RNF7/RBX2, Elongin BC complex and SPSB4. Interacts with CUL5; RNF7; ELOB and ELOC. Interacts with MET. Interacts (via B30.2/SPRY domain) with PAWR; this interaction occurs in association with the Elongin BC complex. Interacts with NOS2. Interacts with EPHB2.

The protein localises to the cytoplasm. The protein resides in the cytosol. It participates in protein modification; protein ubiquitination. Substrate recognition component of a SCF-like ECS (Elongin BC-CUL2/5-SOCS-box protein) E3 ubiquitin-protein ligase complex which mediates the ubiquitination and subsequent proteasomal degradation of target proteins. Negatively regulates nitric oxide (NO) production and limits cellular toxicity in activated macrophages by mediating the ubiquitination and proteasomal degradation of NOS2. Acts as a bridge which links NOS2 with the ECS E3 ubiquitin ligase complex components ELOC and CUL5. Diminishes EphB2-dependent cell repulsive responses by mediating the ubiquitination and degradation of EphB2/CTF2. Regulates cellular clock function by mediating the ubiquitin/proteasome-dependent degradation of the circadian transcriptional repressor NR1D1. The protein is SPRY domain-containing SOCS box protein 4 (SPSB4) of Homo sapiens (Human).